The following is a 373-amino-acid chain: D-alanine--D-alanine ligase (373 aa).

The region spanning 156–363 (KKLLAADGLP…YPTLLATMIE (208 aa)) is the ATP-grasp domain. 184-239 (CERLGLPVFVKPARGGSSIGVSRVSSWDQLPAAVARARRHDPKVIVEAAISGRELE) provides a ligand contact to ATP. Mg(2+)-binding residues include aspartate 318, glutamate 330, and asparagine 332.

Belongs to the D-alanine--D-alanine ligase family. Requires Mg(2+) as cofactor. It depends on Mn(2+) as a cofactor.

It is found in the cytoplasm. The catalysed reaction is 2 D-alanine + ATP = D-alanyl-D-alanine + ADP + phosphate + H(+). It participates in cell wall biogenesis; peptidoglycan biosynthesis. Functionally, cell wall formation. This is D-alanine--D-alanine ligase from Mycobacterium bovis (strain BCG / Pasteur 1173P2).